Reading from the N-terminus, the 264-residue chain is Thymidylate synthase (264 aa).

A dUMP-binding site is contributed by arginine 21. Histidine 51 lines the (6R)-5,10-methylene-5,6,7,8-tetrahydrofolate pocket. Residue 126–127 (RR) coordinates dUMP. Cysteine 146 serves as the catalytic Nucleophile. DUMP contacts are provided by residues 166–169 (RSVD), asparagine 177, and 207–209 (HLY). Position 169 (aspartate 169) interacts with (6R)-5,10-methylene-5,6,7,8-tetrahydrofolate. Alanine 263 is a binding site for (6R)-5,10-methylene-5,6,7,8-tetrahydrofolate.

This sequence belongs to the thymidylate synthase family. Bacterial-type ThyA subfamily. As to quaternary structure, homodimer.

It is found in the cytoplasm. It carries out the reaction dUMP + (6R)-5,10-methylene-5,6,7,8-tetrahydrofolate = 7,8-dihydrofolate + dTMP. Its pathway is pyrimidine metabolism; dTTP biosynthesis. Catalyzes the reductive methylation of 2'-deoxyuridine-5'-monophosphate (dUMP) to 2'-deoxythymidine-5'-monophosphate (dTMP) while utilizing 5,10-methylenetetrahydrofolate (mTHF) as the methyl donor and reductant in the reaction, yielding dihydrofolate (DHF) as a by-product. This enzymatic reaction provides an intracellular de novo source of dTMP, an essential precursor for DNA biosynthesis. In Geobacillus kaustophilus (strain HTA426), this protein is Thymidylate synthase.